A 429-amino-acid chain; its full sequence is Enolase (429 aa).

A (2R)-2-phosphoglycerate-binding site is contributed by Gln-163. The Proton donor role is filled by Glu-205. Positions 242, 287, and 314 each coordinate Mg(2+). Residues Lys-339, Arg-368, Ser-369, and Lys-390 each contribute to the (2R)-2-phosphoglycerate site. The active-site Proton acceptor is the Lys-339.

This sequence belongs to the enolase family. Requires Mg(2+) as cofactor.

The protein localises to the cytoplasm. It is found in the secreted. The protein resides in the cell surface. It catalyses the reaction (2R)-2-phosphoglycerate = phosphoenolpyruvate + H2O. The protein operates within carbohydrate degradation; glycolysis; pyruvate from D-glyceraldehyde 3-phosphate: step 4/5. Its function is as follows. Catalyzes the reversible conversion of 2-phosphoglycerate (2-PG) into phosphoenolpyruvate (PEP). It is essential for the degradation of carbohydrates via glycolysis. This Cupriavidus taiwanensis (strain DSM 17343 / BCRC 17206 / CCUG 44338 / CIP 107171 / LMG 19424 / R1) (Ralstonia taiwanensis (strain LMG 19424)) protein is Enolase.